Reading from the N-terminus, the 324-residue chain is Beta-ketoacyl-[acyl-carrier-protein] synthase III (324 aa).

Catalysis depends on residues C113 and H251. Residues 252-256 (QANKR) form an ACP-binding region. N281 is a catalytic residue.

It belongs to the thiolase-like superfamily. FabH family. As to quaternary structure, homodimer.

It localises to the cytoplasm. It catalyses the reaction malonyl-[ACP] + acetyl-CoA + H(+) = 3-oxobutanoyl-[ACP] + CO2 + CoA. It functions in the pathway lipid metabolism; fatty acid biosynthesis. In terms of biological role, catalyzes the condensation reaction of fatty acid synthesis by the addition to an acyl acceptor of two carbons from malonyl-ACP. Catalyzes the first condensation reaction which initiates fatty acid synthesis and may therefore play a role in governing the total rate of fatty acid production. Possesses both acetoacetyl-ACP synthase and acetyl transacylase activities. Its substrate specificity determines the biosynthesis of branched-chain and/or straight-chain of fatty acids. In Bartonella tribocorum (strain CIP 105476 / IBS 506), this protein is Beta-ketoacyl-[acyl-carrier-protein] synthase III.